The chain runs to 70 residues: DNA-directed RNA polymerase subunit omega (70 aa).

It belongs to the RNA polymerase subunit omega family. In terms of assembly, the RNAP catalytic core consists of 2 alpha, 1 beta, 1 beta' and 1 omega subunit. When a sigma factor is associated with the core the holoenzyme is formed, which can initiate transcription.

The catalysed reaction is RNA(n) + a ribonucleoside 5'-triphosphate = RNA(n+1) + diphosphate. Functionally, promotes RNA polymerase assembly. Latches the N- and C-terminal regions of the beta' subunit thereby facilitating its interaction with the beta and alpha subunits. In Bacillus cereus (strain G9842), this protein is DNA-directed RNA polymerase subunit omega.